We begin with the raw amino-acid sequence, 213 residues long: Orotate phosphoribosyltransferase (213 aa).

Position 26 (K26) interacts with 5-phospho-alpha-D-ribose 1-diphosphate. 34–35 (FF) serves as a coordination point for orotate. 5-phospho-alpha-D-ribose 1-diphosphate-binding positions include 72-73 (YK), R99, K100, K103, H105, and 124-132 (DDVITAGTA). Orotate is bound by residues T128 and R156.

The protein belongs to the purine/pyrimidine phosphoribosyltransferase family. PyrE subfamily. As to quaternary structure, homodimer. Mg(2+) is required as a cofactor.

It catalyses the reaction orotidine 5'-phosphate + diphosphate = orotate + 5-phospho-alpha-D-ribose 1-diphosphate. It participates in pyrimidine metabolism; UMP biosynthesis via de novo pathway; UMP from orotate: step 1/2. Its function is as follows. Catalyzes the transfer of a ribosyl phosphate group from 5-phosphoribose 1-diphosphate to orotate, leading to the formation of orotidine monophosphate (OMP). This Pseudomonas syringae pv. syringae (strain B728a) protein is Orotate phosphoribosyltransferase.